The following is a 1160-amino-acid chain: ATP-dependent helicase/deoxyribonuclease subunit B (1160 aa).

The protein belongs to the helicase family. AddB/RexB type 2 subfamily. Heterodimer of AddA and RexB. Mg(2+) is required as a cofactor.

The heterodimer acts as both an ATP-dependent DNA helicase and an ATP-dependent, dual-direction single-stranded exonuclease. Recognizes the chi site generating a DNA molecule suitable for the initiation of homologous recombination. This subunit has 5' -&gt; 3' nuclease activity but not helicase activity. The polypeptide is ATP-dependent helicase/deoxyribonuclease subunit B (Lactobacillus helveticus (strain DPC 4571)).